The chain runs to 460 residues: Argininosuccinate lyase (460 aa).

The protein belongs to the lyase 1 family. Argininosuccinate lyase subfamily.

The protein resides in the cytoplasm. It carries out the reaction 2-(N(omega)-L-arginino)succinate = fumarate + L-arginine. It functions in the pathway amino-acid biosynthesis; L-arginine biosynthesis; L-arginine from L-ornithine and carbamoyl phosphate: step 3/3. The polypeptide is Argininosuccinate lyase (Alteromonas mediterranea (strain DSM 17117 / CIP 110805 / LMG 28347 / Deep ecotype)).